A 451-amino-acid polypeptide reads, in one-letter code: Tubulin beta-1 chain (451 aa).

Residues Gln11, Glu73, Ser142, Gly146, Thr147, Gly148, Asn208, and Asn230 each coordinate GTP. Glu73 provides a ligand contact to Mg(2+). Positions 430-451 (QEATADDEAEFEEEGEVEGEYA) are disordered. The segment covering 433–451 (TADDEAEFEEEGEVEGEYA) has biased composition (acidic residues).

Belongs to the tubulin family. Dimer of alpha and beta chains. A typical microtubule is a hollow water-filled tube with an outer diameter of 25 nm and an inner diameter of 15 nM. Alpha-beta heterodimers associate head-to-tail to form protofilaments running lengthwise along the microtubule wall with the beta-tubulin subunit facing the microtubule plus end conferring a structural polarity. Microtubules usually have 13 protofilaments but different protofilament numbers can be found in some organisms and specialized cells. Mg(2+) serves as cofactor.

It is found in the cytoplasm. Its subcellular location is the cytoskeleton. Tubulin is the major constituent of microtubules, a cylinder consisting of laterally associated linear protofilaments composed of alpha- and beta-tubulin heterodimers. Microtubules grow by the addition of GTP-tubulin dimers to the microtubule end, where a stabilizing cap forms. Below the cap, tubulin dimers are in GDP-bound state, owing to GTPase activity of alpha-tubulin. The polypeptide is Tubulin beta-1 chain (Homarus americanus (American lobster)).